Here is a 926-residue protein sequence, read N- to C-terminus: MEEDKDSDTLQILNDIINNEPNLEIYVKSKNNNYISSRELPTQDSSTKTSNITTPNNNNNNNNNNNNNNNNNNNNNNNNNNNNNNNNNNNNNNNNNNNNNNNNNNNNTPTSLNSSWKSVVPKRKIDTSSGAILNNNNNVGSPNNQSTSQTNHQQPPPQQLQQQQSLSSTSTPSISPPMLSPSRRNVTSPNLTRSDPTVPITNSRPTSPLTPPLSPQFQLNNLNFDDNNDHSTTTTNNNNNNNNNNSNNNNNNNRPKLMRENSINKRSSLQTLPVSSSSSSSAEDEILIKVWLPMEYTGQLYKVRKFSGGSSTLKVSSMLNSQLSPMYQSPKNKLFLNNEEKPIPSHLTLKDLSLSKYDILYLRREPEYELIIPSSPQCGSLVMDKDIKIDDMLIKIEHWLKDILDHAPHSTSQQQQQQLQQQPILHVDKHEYFTSLEDQQLMSGHITNSSQYTLLKKLSVPTSNSRQTGKMSRGYYLRLYDQKPISNYGIKIKDTLIFKKKILNRGLSIDDAEGGIEITVLYSPLSMLPTTSDLDFEKELKENQQQLNNNNNNNNNNNNNNNNNNNNNNNNITTTTTTTTSSLINQTNEILLPNLIKIDNTSLLQDIKNEKKKRKSKRTPSSVGLPFNIIHKTHVDFEYKWSGTSVEDTFEFKEKLGQGGYGAVFKVLHRETNFPLAIKVLSITPTRIKDIEKEIDLLKKCRCPNVLSYYGSISSKLTELWILMDHCAVGSINDMMKICCDTLDEEQIAVVTLNVLNGLGYLHSKGIVHLDVKAANILLTEDKQIKIADFGVSQQLQTEYGQANVYIGSPLYMAPEVILKAPYNSKADIWSLGITLIELAEGRPPNRGLRSMNQLVEIPNMPPPKLSNPKDWSPCFNNFLATCLVKDPVQRPSVIDLLSHDFIKNAKTTEVLSNLVKQTLSSRQSI.

A compositionally biased stretch (polar residues) spans 36–55 (SSRELPTQDSSTKTSNITTP). 2 disordered regions span residues 36–257 (SSRE…RPKL) and 546–576 (QLNN…TTTT). Positions 56–107 (NNNNNNNNNNNNNNNNNNNNNNNNNNNNNNNNNNNNNNNNNNNNNNNNNNNN) are enriched in low complexity. A compositionally biased stretch (polar residues) spans 108–117 (TPTSLNSSWK). Positions 134–173 (NNNNNVGSPNNQSTSQTNHQQPPPQQLQQQQSLSSTSTPS) are enriched in low complexity. Over residues 183–204 (RRNVTSPNLTRSDPTVPITNSR) the composition is skewed to polar residues. The span at 215 to 253 (PQFQLNNLNFDDNNDHSTTTTNNNNNNNNNNSNNNNNNN) shows a compositional bias: low complexity. The stretch at 534–567 (LDFEKELKENQQQLNNNNNNNNNNNNNNNNNNNN) forms a coiled coil. Residues 650–903 (FEFKEKLGQG…VIDLLSHDFI (254 aa)) enclose the Protein kinase domain. Residues 656-664 (LGQGGYGAV) and Lys679 contribute to the ATP site. Catalysis depends on Asp771, which acts as the Proton acceptor.

This sequence belongs to the protein kinase superfamily. STE Ser/Thr protein kinase family. STE20 subfamily. The cofactor is Mg(2+).

It catalyses the reaction L-seryl-[protein] + ATP = O-phospho-L-seryl-[protein] + ADP + H(+). The catalysed reaction is L-threonyl-[protein] + ATP = O-phospho-L-threonyl-[protein] + ADP + H(+). Its function is as follows. May play a role in responding to changes in chemoattractant levels. The sequence is that of Serine/threonine-protein kinase pakE from Dictyostelium discoideum (Social amoeba).